The primary structure comprises 413 residues: Coiled-coil domain-containing protein 83 (413 aa).

2 coiled-coil regions span residues His32–Arg186 and Ile215–Asn255.

In Bos taurus (Bovine), this protein is Coiled-coil domain-containing protein 83 (CCDC83).